Reading from the N-terminus, the 172-residue chain is Adrenodoxin homolog, mitochondrial (172 aa).

Residues 1-16 constitute a mitochondrion transit peptide; the sequence is MLKIVTRAGHTARISN. Residues 61–163 enclose the 2Fe-2S ferredoxin-type domain; the sequence is LKITFILKDG…GIRVALPQMT (103 aa). Residues cysteine 98, cysteine 104, cysteine 107, and cysteine 144 each coordinate [2Fe-2S] cluster.

The protein belongs to the adrenodoxin/putidaredoxin family. In terms of assembly, interacts in its reduced state with the apo form of ISU1. Requires [2Fe-2S] cluster as cofactor.

The protein localises to the mitochondrion matrix. Its function is as follows. Iron-sulfur protein that transfers electrons in a wide variety of metabolic reactions. Involved in heme A biosynthesis and in iron-sulfur cluster assembly. Transfers electrons from adrenodoxin reductase ARH1 to heme A synthase COX15, a heme protein that catalyzes the conversion of heme O to heme A. Required for the de novo synthesis of Fe-S clusters on iron sulfur cluster assembly protein ISU1. Interact in its reduced state with ISU1 to productively deliver electrons for Fe-S cluster synthesis. Essential for coenzyme Q biosynthesis. May transfer the electrons required for the hydroxylation reaction performed by COQ6. In Saccharomyces cerevisiae (strain ATCC 204508 / S288c) (Baker's yeast), this protein is Adrenodoxin homolog, mitochondrial.